The chain runs to 298 residues: MYNRVDGEYAHTEQAEESSWPADGSECAQTLTEIARLESLAPGELFDRMGLCFSKPHTSDAIDDSSNTSGLSTSSLSSSSELSVATSPVRPLFDYRTAELPQANVSGICVGLAAEWLLDLPSSASSRMGVLLPGTENHRSAARRQEQSEKLKTQLKEDKAEGSHNFQAKSTILRDAGLEPSAEETRYRFGTSSCIDKIVNELAQDPSVHLVSLKFVQPGAGTHTIATATSNGTTILSDPNYGEFTVPSDRVGGLFKSLAERYSTLNKRDISAVVTQRIRYGHPNATDLALFPRAEPHR.

A compositionally biased stretch (basic and acidic residues) spans 1–14 (MYNRVDGEYAHTEQ). Disordered regions lie at residues 1–25 (MYNRVDGEYAHTEQAEESSWPADGS) and 59–80 (SDAIDDSSNTSGLSTSSLSSSS). A compositionally biased stretch (low complexity) spans 65 to 80 (SSNTSGLSTSSLSSSS). The active site involves C109. Residues 137-162 (NHRSAARRQEQSEKLKTQLKEDKAEG) show a composition bias toward basic and acidic residues. The interval 137–166 (NHRSAARRQEQSEKLKTQLKEDKAEGSHNF) is disordered. Residues H223 and D238 contribute to the active site.

The protein belongs to the peptidase C58 family.

Potential cysteine protease, which may play a central role after invasion of host cell. This is Putative cysteine protease YopT-like blr2058 from Bradyrhizobium diazoefficiens (strain JCM 10833 / BCRC 13528 / IAM 13628 / NBRC 14792 / USDA 110).